We begin with the raw amino-acid sequence, 150 residues long: SsrA-binding protein (150 aa).

The tract at residues 129–150 is disordered; the sequence is KRQTLKSKEADREMARALRDRH.

Belongs to the SmpB family.

The protein localises to the cytoplasm. Its function is as follows. Required for rescue of stalled ribosomes mediated by trans-translation. Binds to transfer-messenger RNA (tmRNA), required for stable association of tmRNA with ribosomes. tmRNA and SmpB together mimic tRNA shape, replacing the anticodon stem-loop with SmpB. tmRNA is encoded by the ssrA gene; the 2 termini fold to resemble tRNA(Ala) and it encodes a 'tag peptide', a short internal open reading frame. During trans-translation Ala-aminoacylated tmRNA acts like a tRNA, entering the A-site of stalled ribosomes, displacing the stalled mRNA. The ribosome then switches to translate the ORF on the tmRNA; the nascent peptide is terminated with the 'tag peptide' encoded by the tmRNA and targeted for degradation. The ribosome is freed to recommence translation, which seems to be the essential function of trans-translation. The chain is SsrA-binding protein from Syntrophotalea carbinolica (strain DSM 2380 / NBRC 103641 / GraBd1) (Pelobacter carbinolicus).